We begin with the raw amino-acid sequence, 292 residues long: 4-hydroxy-tetrahydrodipicolinate synthase (292 aa).

Thr-45 is a pyruvate binding site. Tyr-133 (proton donor/acceptor) is an active-site residue. Lys-161 serves as the catalytic Schiff-base intermediate with substrate. Ile-203 provides a ligand contact to pyruvate.

This sequence belongs to the DapA family. As to quaternary structure, homotetramer; dimer of dimers.

The protein localises to the cytoplasm. The catalysed reaction is L-aspartate 4-semialdehyde + pyruvate = (2S,4S)-4-hydroxy-2,3,4,5-tetrahydrodipicolinate + H2O + H(+). It functions in the pathway amino-acid biosynthesis; L-lysine biosynthesis via DAP pathway; (S)-tetrahydrodipicolinate from L-aspartate: step 3/4. Its function is as follows. Catalyzes the condensation of (S)-aspartate-beta-semialdehyde [(S)-ASA] and pyruvate to 4-hydroxy-tetrahydrodipicolinate (HTPA). The chain is 4-hydroxy-tetrahydrodipicolinate synthase from Salmonella arizonae (strain ATCC BAA-731 / CDC346-86 / RSK2980).